A 373-amino-acid polypeptide reads, in one-letter code: GTP cyclohydrolase 1 type 2 homolog (373 aa).

A divalent metal cation contacts are provided by His-68, His-69, Asp-107, His-333, and Glu-336.

It belongs to the GTP cyclohydrolase I type 2/NIF3 family. As to quaternary structure, homohexamer.

The chain is GTP cyclohydrolase 1 type 2 homolog (yqfO) from Bacillus subtilis (strain 168).